The following is a 172-amino-acid chain: Calcium channel flower homolog (172 aa).

Topologically, residues 1 to 32 (MSSSGGAPGASASSAPPAQEEGMTWWYRWLCR) are cytoplasmic. Residues 33 to 53 (LSGVLGAVSCAISGLFNCITI) form a helical membrane-spanning segment. The Extracellular portion of the chain corresponds to 54-57 (HPLN). Residues 58–78 (IAAGVWMIMNAFILLLCEAPF) form a helical membrane-spanning segment. Residues 79–102 (CCQFIEFANTVAEKVDRLRSWQKA) lie on the Cytoplasmic side of the membrane. The helical transmembrane segment at 103–123 (VFYCGMAVVPIVISLTLTTLL) threads the bilayer. At 124 to 125 (GN) the chain is on the extracellular side. Residues 126-142 (AIAFATGVLYGLSALGK) traverse the membrane as a helical segment. The Cytoplasmic segment spans residues 143-172 (KGDAISYARIQQQRQQADEEKLAETLEGEL).

This sequence belongs to the calcium channel flower family. In terms of assembly, interacts with adaptor protein complex 2 (AP-2). In terms of tissue distribution, detected in skin cells at low levels of expression (at protein level).

The protein localises to the cell membrane. It localises to the cytoplasmic vesicle. The protein resides in the secretory vesicle. Its subcellular location is the synaptic vesicle. It is found in the golgi apparatus. The protein localises to the vesicle. It localises to the early endosome. The protein resides in the recycling endosome. Its subcellular location is the endoplasmic reticulum membrane. Transmembrane protein which mediates synaptic endocytosis and fitness-based cell culling. In response to different stimulus strengths, controls two major modes of synaptic vesicle (SV) retrieval in hippocampal neurons; Clathrin-mediated endocytosis (CME) in response to mild stimulation and activity-dependent bulk endocytosis (ADBE) in response to strong stimulation. In cytotoxic T-lymphoocytes (CTLs) facilitates calcium-dependent endocytosis of cytotoxic granules at the immuno synapse. Different isoforms work as fitness fingerprints in 'loser' and 'winner' cells and thereby mediate win/lose decisions as part of the cell competition process. Its function is as follows. Functions with the other flower isoforms to produce tissue-specific fitness fingerprints that identify unfit or fit cells during cell selection processes in order to maintain tissue health. During cell competition, if levels of this isoform in cells is higher than in the surrounding neighboring cells, the cells are recognized as 'winner' cells, and do not undergo elimination via apoptosis. In terms of biological role, functions with the other flower isoforms to produce tissue-specific fitness fingerprints that identify unfit or fit cells during cell selection processes in order to maintain tissue health. During cell competition, if levels of this isoform in unfit cells is higher than in the surrounding neighboring cells, the cells are recognized as 'loser' cells, and undergo elimination via apoptosis to be replaced by the surrounding healthy 'winner' cell population. This Homo sapiens (Human) protein is Calcium channel flower homolog (CACFD1).